We begin with the raw amino-acid sequence, 209 residues long: Large ribosomal subunit protein uL3 (209 aa).

The tract at residues 127–166 is disordered; it reads NFGGGQRTHGQSDRLRAPGSIGGASDPSKTFKGTKMGGRM.

The protein belongs to the universal ribosomal protein uL3 family. In terms of assembly, part of the 50S ribosomal subunit. Forms a cluster with proteins L14 and L19.

One of the primary rRNA binding proteins, it binds directly near the 3'-end of the 23S rRNA, where it nucleates assembly of the 50S subunit. The protein is Large ribosomal subunit protein uL3 of Chlorobium phaeovibrioides (strain DSM 265 / 1930) (Prosthecochloris vibrioformis (strain DSM 265)).